We begin with the raw amino-acid sequence, 168 residues long: Large ribosomal subunit protein uL11 (168 aa).

This sequence belongs to the universal ribosomal protein uL11 family. In terms of assembly, part of the ribosomal stalk of the 50S ribosomal subunit. Interacts with L10 and the large rRNA to form the base of the stalk. L10 forms an elongated spine to which L12 dimers bind in a sequential fashion forming a multimeric L10(L12)X complex.

Forms part of the ribosomal stalk which helps the ribosome interact with GTP-bound translation factors. The polypeptide is Large ribosomal subunit protein uL11 (Metallosphaera sedula (strain ATCC 51363 / DSM 5348 / JCM 9185 / NBRC 15509 / TH2)).